The chain runs to 1312 residues: Kinesin-like protein KIF16B (1312 aa).

The Kinesin motor domain maps to 3 to 358; sequence SVKVAVRVRP…LRYANRAKNI (356 aa). 102-109 serves as a coordination point for ATP; that stretch reads GQTGSGKS. The stretch at 366-425 forms a coiled coil; the sequence is EDANVKLIRELRAEIARLKTLLAQGNQIALLDSPTALSMEEKLHQNEARVQELTKEWTNK. Position 398 is a phosphoserine (S398). Positions 480 to 544 constitute an FHA domain; sequence VGREDASTEQ…LNQGAVILLG (65 aa). At T577 the chain carries Phosphothreonine. Phosphoserine occurs at positions 582, 838, 1047, and 1145. Coiled coils occupy residues 835 to 913 and 941 to 1073; these read KLAS…LQNH and QVEK…KQKI. Residues 1177–1291 form the PX domain; the sequence is DPIKISIPRY…KVGLTLSKHT (115 aa).

This sequence belongs to the TRAFAC class myosin-kinesin ATPase superfamily. Kinesin family. As to quaternary structure, interacts with PTPN21. Interacts with RAB14.

The protein localises to the cytoplasm. The protein resides in the cytoskeleton. It is found in the early endosome membrane. Its subcellular location is the spindle. Functionally, plus end-directed microtubule-dependent motor protein involved in endosome transport and receptor recycling and degradation. Regulates the plus end motility of early endosomes and the balance between recycling and degradation of receptors such as EGF receptor (EGFR) and FGF receptor (FGFR). Regulates the Golgi to endosome transport of FGFR-containing vesicles during early development, a key process for developing basement membrane and epiblast and primitive endoderm lineages during early postimplantation development. The sequence is that of Kinesin-like protein KIF16B (Kif16b) from Mus musculus (Mouse).